A 388-amino-acid polypeptide reads, in one-letter code: Chorismate synthase (388 aa).

Positions 39 and 45 each coordinate NADP(+). FMN is bound by residues 130-132, 251-252, Gly-296, 311-315, and Arg-337; these read RSS, NA, and KPIPT.

Belongs to the chorismate synthase family. Homotetramer. Requires FMNH2 as cofactor.

It catalyses the reaction 5-O-(1-carboxyvinyl)-3-phosphoshikimate = chorismate + phosphate. The protein operates within metabolic intermediate biosynthesis; chorismate biosynthesis; chorismate from D-erythrose 4-phosphate and phosphoenolpyruvate: step 7/7. Catalyzes the anti-1,4-elimination of the C-3 phosphate and the C-6 proR hydrogen from 5-enolpyruvylshikimate-3-phosphate (EPSP) to yield chorismate, which is the branch point compound that serves as the starting substrate for the three terminal pathways of aromatic amino acid biosynthesis. This reaction introduces a second double bond into the aromatic ring system. This chain is Chorismate synthase, found in Streptococcus pyogenes serotype M5 (strain Manfredo).